We begin with the raw amino-acid sequence, 258 residues long: MLKTRVIPCLDVKDGRVVKGVQFLALRDAGDPVEAAKAYDAAGADELCFLDITASHEARGILLDVVQRTAEACFMPLTVGGGVRSVEDIRALLLAGADKVSINTAAVNNPDFVAEAAEKFGNQCIVVAIDAKRVSGPGEAPRWEIFTHGGRRATGLDAITFARTVTARGAGELLVTSMDRDGMRSGYDLGLTRAIADAVSVPVIASGGVGGLDDLVAGVAEGHASAVLAASIFHFGEATVAQAKAHMAAAGLAMRLDP.

Catalysis depends on residues D11 and D130.

Belongs to the HisA/HisF family. In terms of assembly, heterodimer of HisH and HisF.

It localises to the cytoplasm. The enzyme catalyses 5-[(5-phospho-1-deoxy-D-ribulos-1-ylimino)methylamino]-1-(5-phospho-beta-D-ribosyl)imidazole-4-carboxamide + L-glutamine = D-erythro-1-(imidazol-4-yl)glycerol 3-phosphate + 5-amino-1-(5-phospho-beta-D-ribosyl)imidazole-4-carboxamide + L-glutamate + H(+). The protein operates within amino-acid biosynthesis; L-histidine biosynthesis; L-histidine from 5-phospho-alpha-D-ribose 1-diphosphate: step 5/9. IGPS catalyzes the conversion of PRFAR and glutamine to IGP, AICAR and glutamate. The HisF subunit catalyzes the cyclization activity that produces IGP and AICAR from PRFAR using the ammonia provided by the HisH subunit. The sequence is that of Imidazole glycerol phosphate synthase subunit HisF from Methylobacterium sp. (strain 4-46).